Reading from the N-terminus, the 70-residue chain is Protein SlyX homolog (70 aa).

The protein belongs to the SlyX family.

The chain is Protein SlyX homolog from Shewanella loihica (strain ATCC BAA-1088 / PV-4).